The chain runs to 161 residues: Phosphopantetheine adenylyltransferase (161 aa).

Residue Thr-11 coordinates substrate. Residues 11–12 and His-19 each bind ATP; that span reads TF. Substrate-binding residues include Lys-43, Thr-75, and Arg-89. Residues 90–92, Glu-100, and 125–131 each bind ATP; these read GLR and YSFLSSS.

Belongs to the bacterial CoaD family. Homohexamer. Mg(2+) serves as cofactor.

It is found in the cytoplasm. It catalyses the reaction (R)-4'-phosphopantetheine + ATP + H(+) = 3'-dephospho-CoA + diphosphate. Its pathway is cofactor biosynthesis; coenzyme A biosynthesis; CoA from (R)-pantothenate: step 4/5. Functionally, reversibly transfers an adenylyl group from ATP to 4'-phosphopantetheine, yielding dephospho-CoA (dPCoA) and pyrophosphate. This Listeria welshimeri serovar 6b (strain ATCC 35897 / DSM 20650 / CCUG 15529 / CIP 8149 / NCTC 11857 / SLCC 5334 / V8) protein is Phosphopantetheine adenylyltransferase.